Reading from the N-terminus, the 284-residue chain is 2,3,4,5-tetrahydropyridine-2,6-dicarboxylate N-succinyltransferase (284 aa).

Positions 111 and 148 each coordinate substrate.

This sequence belongs to the transferase hexapeptide repeat family. Homotrimer.

Its subcellular location is the cytoplasm. The catalysed reaction is (S)-2,3,4,5-tetrahydrodipicolinate + succinyl-CoA + H2O = (S)-2-succinylamino-6-oxoheptanedioate + CoA. It participates in amino-acid biosynthesis; L-lysine biosynthesis via DAP pathway; LL-2,6-diaminopimelate from (S)-tetrahydrodipicolinate (succinylase route): step 1/3. This Brucella melitensis biotype 2 (strain ATCC 23457) protein is 2,3,4,5-tetrahydropyridine-2,6-dicarboxylate N-succinyltransferase.